The following is a 407-amino-acid chain: Argininosuccinate synthase (407 aa).

Residue 8-16 (AYSGGLDTT) coordinates ATP. L-citrulline-binding residues include Tyr86 and Ser91. Gly116 serves as a coordination point for ATP. Positions 118, 122, and 123 each coordinate L-aspartate. L-citrulline is bound at residue Asn122. 5 residues coordinate L-citrulline: Arg126, Ser178, Ser187, Glu264, and Tyr276.

It belongs to the argininosuccinate synthase family. Type 1 subfamily. Homotetramer.

Its subcellular location is the cytoplasm. It catalyses the reaction L-citrulline + L-aspartate + ATP = 2-(N(omega)-L-arginino)succinate + AMP + diphosphate + H(+). It participates in amino-acid biosynthesis; L-arginine biosynthesis; L-arginine from L-ornithine and carbamoyl phosphate: step 2/3. This chain is Argininosuccinate synthase, found in Lachnoclostridium phytofermentans (strain ATCC 700394 / DSM 18823 / ISDg) (Clostridium phytofermentans).